We begin with the raw amino-acid sequence, 629 residues long: Protein fem-1 homolog B (629 aa).

ANK repeat units follow at residues 47–77 (QRSTPLIIAARNGHSKVVRLLLEHYKVDVQQ), 89–118 (DGATALWCAAGAGHYEVVKLLVSHEANVNH), 122–151 (TNSTPLRAACFDGRLDIVRFLVENNANISI), 155–184 (YDNTCLMIAAYKGHSDVVHYLLRQHADPNA), 188–217 (CGATALHFAAEAGHLDIVRELVKWKAAMVV), and 220–250 (HGMTPLKVAAESCKADVVELLLAHSDCDAKS). One copy of the TPR repeat lies at 346–379 (SHPIIYRGAVYADNMQFEQCIKLWLHALQLRQKG). ANK repeat units follow at residues 485 to 529 (EGGS…NVNA) and 533 to 570 (MGNSPLHVIVQYNRPISDFLTLHAIIISLVEAGAHTDM).

It belongs to the fem-1 family. Component of a CRL2 E3 ubiquitin-protein ligase complex, also named ECS (Elongin BC-CUL2/5-SOCS-box protein) complex.

It is found in the cytoplasm. Its subcellular location is the nucleus. It functions in the pathway protein modification; protein ubiquitination. In terms of biological role, substrate-recognition component of a Cul2-RING (CRL2) E3 ubiquitin-protein ligase complex of the DesCEND (destruction via C-end degrons) pathway, which recognizes a C-degron located at the extreme C terminus of target proteins, leading to their ubiquitination and degradation. The C-degron recognized by the DesCEND pathway is usually a motif of less than ten residues and can be present in full-length proteins, truncated proteins or proteolytically cleaved forms. The CRL2(FEM1B) complex specifically recognizes proteins ending with -Gly-Leu-Asp-Arg, leading to their ubiquitination and degradation. This chain is Protein fem-1 homolog B, found in Xenopus laevis (African clawed frog).